The following is a 419-amino-acid chain: MTMQLGLALVLGVAMCLGCGQPLLRAPERPFCVLWNVPSARCKARFGVHLPLEALGITANHGQRFHGQNITIFYKSQLGLYPYFGPRGTAHNGGIPQAVSLDHHLARAAYQIHRSLRPGFTGLAVLDWEEWCPLWAGNWGRRQAYQAASCAWAQRVYPNLDPQEQLCKARAGFEEAARALMEDTLRLGRMLRPHGLWGFYHYPACGNGWHGTASNYTGHCHAAALARNTQLYWLWAASSALFPSIYLPPGLPPAYHQAFVRYRLEEAFRVALVGHPHPLPVLAYARLTHRNSGRFLSQDELVQTIGVSAALGASGVVLWGDLSFSSSEEECWHLRGYLVGTLGPYVINVTRAAMACSHQRCHGHGRCAWQDPGQLKVFLHLHPGGSPGAWESFSCRCYWGWAGPTCQEPRPELGPEEAT.

A signal peptide spans 1-16 (MTMQLGLALVLGVAMC). Intrachain disulfides connect cysteine 42–cysteine 331, cysteine 205–cysteine 220, cysteine 356–cysteine 367, cysteine 361–cysteine 395, and cysteine 397–cysteine 406. N-linked (GlcNAc...) asparagine glycosylation occurs at asparagine 69. Glutamate 129 functions as the Proton donor in the catalytic mechanism. Residue asparagine 215 is glycosylated (N-linked (GlcNAc...) asparagine). The 56-residue stretch at 352–407 (AAMACSHQRCHGHGRCAWQDPGQLKVFLHLHPGGSPGAWESFSCRCYWGWAGPTCQ) folds into the EGF-like domain.

Belongs to the glycosyl hydrolase 56 family. Post-translationally, N-glycosylated. As to expression, highly expressed in bladder, spleen and liver. Expressed at low levels in the kidney.

The protein resides in the secreted. The protein localises to the cell membrane. It is found in the cytoplasmic vesicle. Its subcellular location is the secretory vesicle. It localises to the acrosome. The protein resides in the endoplasmic reticulum. The protein localises to the early endosome. It catalyses the reaction Random hydrolysis of (1-&gt;4)-linkages between N-acetyl-beta-D-glucosamine and D-glucuronate residues in hyaluronate.. Facilitates sperm penetration into the layer of cumulus cells surrounding the egg by digesting hyaluronic acid. Involved in induction of the acrosome reaction in the sperm. Involved in follicular atresia, the breakdown of immature ovarian follicles that are not selected to ovulate. Induces ovarian granulosa cell apoptosis, possibly via apoptotic signaling pathway involving CASP8 and CASP3 activation, and poly(ADP-ribose) polymerase (PARP) cleavage. Has no hyaluronidase activity in embryonic fibroblasts in vitro. Has no hyaluronidase activity in granulosa cells in vitro. This chain is Hyaluronidase-3 (HYAL3), found in Sus scrofa (Pig).